A 217-amino-acid chain; its full sequence is Oxygen-insensitive NAD(P)H nitroreductase (217 aa).

10–14 contributes to the FMN binding site; that stretch reads RHSTK. NAD(+)-binding residues include Lys-14, Thr-41, Thr-67, Asn-71, Lys-74, and Arg-107. Position 71 (Asn-71) interacts with FMN. FMN-binding positions include 165–166 and 205–207; these read EG and KSR.

It belongs to the nitroreductase family. Homodimer. FMN serves as cofactor.

Its function is as follows. Reduction of a variety of nitroaromatic compounds using NADH (and to lesser extent NADPH) as source of reducing equivalents; two electrons are transferred. The chain is Oxygen-insensitive NAD(P)H nitroreductase from Enterobacter cloacae.